The sequence spans 493 residues: Dipeptide permease D (493 aa).

Residues 1–13 lie on the Cytoplasmic side of the membrane; that stretch reads MNKHASQPRAIYY. A helical membrane pass occupies residues 14–34; that stretch reads VVALQIWEYFSFYGMRALLIL. Over 35 to 48 the chain is Periplasmic; it reads YLTNQLKYNDTHAY. The helical transmembrane segment at 49-69 threads the bilayer; sequence ELFSAYCSLVYVTPILGGFLA. Residues 70–77 lie on the Cytoplasmic side of the membrane; it reads DKVLGNRM. A helical transmembrane segment spans residues 78–98; that stretch reads AVMLGALLMAIGHVVLGASEI. At 99–100 the chain is on the periplasmic side; the sequence is HP. Residues 101-121 form a helical membrane-spanning segment; that stretch reads SFLYLSLAIIVCGYGLFKSNV. Residues 122-137 are Cytoplasmic-facing; that stretch reads SCLLGELYEPTDPRRD. The chain crosses the membrane as a helical span at residues 138–158; that stretch reads GGFSLMYAAGNVGSIIAPIAC. Over 159 to 166 the chain is Periplasmic; that stretch reads GYAQEEYS. The chain crosses the membrane as a helical span at residues 167-187; it reads WAMGFGLAAVGMIAGLVIFLC. Residues 188–211 lie on the Cytoplasmic side of the membrane; it reads GNRHFTHTRGVNKKVLRATNFLLP. A helical transmembrane segment spans residues 212–232; the sequence is NWGWLLVLLVATPALITILFW. The Periplasmic portion of the chain corresponds to 233-234; that stretch reads KE. Residues 235–255 traverse the membrane as a helical segment; it reads WSVYALIVATIIGLGVLAKIY. The Cytoplasmic segment spans residues 256–266; sequence RKAENQKQRKE. The helical transmembrane segment at 267–287 threads the bilayer; the sequence is LGLIVTLTFFSMLFWAFAQQG. Topologically, residues 288–311 are periplasmic; it reads GSSISLYIDRFVNRDMFGYTVPTA. Residues 312 to 332 form a helical membrane-spanning segment; it reads MFQSINAFAVMLCGVFLAWVV. Topologically, residues 333–343 are cytoplasmic; sequence KESVAGNRTVR. Residues 344–364 traverse the membrane as a helical segment; sequence IWGKFALGLGLMSAGFCILTL. At 365–378 the chain is on the periplasmic side; the sequence is SARWSAMYGHSSLP. Residues 379–399 traverse the membrane as a helical segment; sequence LMVLGLAVMGFAELFIDPVAM. The Cytoplasmic segment spans residues 400-412; sequence SQITRIEIPGVTG. Residues 413-433 form a helical membrane-spanning segment; it reads VLTGIYMLLSGAIANYLAGVI. The Periplasmic segment spans residues 434-461; it reads ADQTSQASFDASGAINYSINAYIEVFDQ. Residues 462–482 traverse the membrane as a helical segment; sequence ITWGALACVGLVLMIWLYQAL. The Cytoplasmic segment spans residues 483–493; the sequence is KFRNRALALES.

This sequence belongs to the major facilitator superfamily. Proton-dependent oligopeptide transporter (POT/PTR) (TC 2.A.17) family. DtpD subfamily.

The protein resides in the cell inner membrane. Probable proton-dependent permease that transports dipeptides. In Escherichia coli (strain K12), this protein is Dipeptide permease D (dtpD).